We begin with the raw amino-acid sequence, 223 residues long: Exosome complex component RRP46 (223 aa).

Belongs to the RNase PH family. In terms of assembly, component of the RNA exosome complex. Specifically part of the catalytically inactive RNA exosome core complex (Exo-9) which may associate with the catalytic subunits RRP6 and DIS3 in cytoplasmic- and nuclear-specific RNA exosome complex forms. Exo-9 is formed by a hexameric base ring of RNase PH domain-containing subunits and a cap ring consisting of CSL4, RRP4 and RRP40.

The protein localises to the cytoplasm. Its subcellular location is the nucleus. It is found in the nucleolus. Non-catalytic component of the RNA exosome complex which has 3'-&gt;5' exoribonuclease activity and participates in a multitude of cellular RNA processing and degradation events. In the nucleus, the RNA exosome complex is involved in proper maturation of stable RNA species such as rRNA, snRNA and snoRNA, in the elimination of RNA processing by-products and non-coding 'pervasive' transcripts, such as antisense RNA species and cryptic unstable transcripts (CUTs), and of mRNAs with processing defects, thereby limiting or excluding their export to the cytoplasm. In the cytoplasm, the RNA exosome complex is involved in general mRNA turnover and in RNA surveillance pathways, preventing translation of aberrant mRNAs. The catalytic inactive RNA exosome core complex of 9 subunits (Exo-9) is proposed to play a pivotal role in the binding and presentation of RNA for ribonucleolysis, and to serve as a scaffold for the association with catalytic subunits and accessory proteins or complexes. RRP46 is part of the hexameric ring of RNase PH domain-containing subunits proposed to form a central channel which threads RNA substrates for degradation. The protein is Exosome complex component RRP46 (RRP46) of Saccharomyces cerevisiae (strain ATCC 204508 / S288c) (Baker's yeast).